The chain runs to 141 residues: ATP synthase epsilon chain (141 aa).

It belongs to the ATPase epsilon chain family. In terms of assembly, F-type ATPases have 2 components, CF(1) - the catalytic core - and CF(0) - the membrane proton channel. CF(1) has five subunits: alpha(3), beta(3), gamma(1), delta(1), epsilon(1). CF(0) has three main subunits: a, b and c.

The protein localises to the cell inner membrane. Functionally, produces ATP from ADP in the presence of a proton gradient across the membrane. This is ATP synthase epsilon chain from Hahella chejuensis (strain KCTC 2396).